Here is a 117-residue protein sequence, read N- to C-terminus: MTRIKRGYIARRRRTKLRLFASSFRGAHSRLTRTMTQQRIRALVSAHRDRGKRKRDFRRLWITRINAVIHEMGVFYSYNEFIHNLYKKQLLLNRKILAQIALLNRSCLYTISNDIKK.

Belongs to the bacterial ribosomal protein bL20 family.

Its subcellular location is the plastid. The protein localises to the chloroplast. Functionally, binds directly to 23S ribosomal RNA and is necessary for the in vitro assembly process of the 50S ribosomal subunit. It is not involved in the protein synthesizing functions of that subunit. The protein is Large ribosomal subunit protein bL20c (rpl20) of Arabidopsis thaliana (Mouse-ear cress).